The sequence spans 217 residues: Magnetosome protein MamA (217 aa).

TPR repeat units follow at residues 12-44, 46-79, 80-113, 114-147, 148-181, and 182-215; these read VTLY…NDDI, QVYY…DAFD, VEVA…APDN, IKVA…NPVN, FNVR…RPNE, and GKVH…DERS. The N-terminal domain stretch occupies residues 41 to 112; sequence NDDIRQVYYR…LERSIADAPD (72 aa). The interval 113-217 is C-terminal domain; sequence NIKVATVLGL…ANELDERSAV (105 aa).

Belongs to the magnetosome MamA family. In terms of assembly, forms round, 20 nm diameter complexes with a central cavity. Probably binds MamC. Interacts with full-length Mms6.

It localises to the magnetosome membrane. In terms of biological role, probably forms a large homooligomer on which other magnetosome subunits assemble. Required for formation of functional magnetosomes from pre-existing vesicles. This is Magnetosome protein MamA from Magnetospirillum gryphiswaldense (strain DSM 6361 / JCM 21280 / NBRC 15271 / MSR-1).